A 518-amino-acid polypeptide reads, in one-letter code: GTPase MTG2, mitochondrial (518 aa).

The transit peptide at 1-23 directs the protein to the mitochondrion; that stretch reads MSIAWSSVFKRELRLERFLPRVY. In terms of domain architecture, Obg spans 89-339; it reads GNFVDVRIVK…QHFLFELKSI (251 aa). Residues 340 to 512 enclose the OBG-type G domain; that stretch reads ADLGLIGLPN…LKKKMFKCAR (173 aa). GTP contacts are provided by residues 346 to 353, 394 to 398, and 460 to 463; these read GLPNAGKS, DIPGI, and NKVD.

The protein belongs to the TRAFAC class OBG-HflX-like GTPase superfamily. OBG GTPase family. As to quaternary structure, interacts with the mitochondrial 54S large ribosomal subunit.

It localises to the mitochondrion inner membrane. Required for mitochondrial protein synthesis. May be involved in mitochondrial ribosome biogenesis. The sequence is that of GTPase MTG2, mitochondrial (MTG2) from Saccharomyces cerevisiae (strain ATCC 204508 / S288c) (Baker's yeast).